The following is a 308-amino-acid chain: Cilia- and flagella-associated protein 73 (308 aa).

Coiled coils occupy residues 103–134 (RIQKEKEIEQLTEVLEELKSEKERILEVLEKN) and 164–227 (LSAT…QEAK).

The protein belongs to the CFAP73 family. As to quaternary structure, interacts with FAP100; form the modifier of inner arm (MIA) complex.

It localises to the cytoplasm. Its subcellular location is the cytoskeleton. It is found in the flagellum axoneme. Its function is as follows. As part of MIA, a complex associated with the outer doublet microtubules of the axoneme, may play a role in ciliary/flagellar motility by regulating the assembly and the activity of inner dynein arm. The polypeptide is Cilia- and flagella-associated protein 73 (Chlamydomonas reinhardtii (Chlamydomonas smithii)).